Reading from the N-terminus, the 230-residue chain is Orotate phosphoribosyltransferase (230 aa).

Residues arginine 107, lysine 108, lysine 111, histidine 113, and 133–141 (EDLTTAGGS) contribute to the 5-phospho-alpha-D-ribose 1-diphosphate site. Residue threonine 137 coordinates orotate.

It belongs to the purine/pyrimidine phosphoribosyltransferase family. PyrE subfamily. As to quaternary structure, homodimer. Mg(2+) serves as cofactor.

It catalyses the reaction orotidine 5'-phosphate + diphosphate = orotate + 5-phospho-alpha-D-ribose 1-diphosphate. Its pathway is pyrimidine metabolism; UMP biosynthesis via de novo pathway; UMP from orotate: step 1/2. Its function is as follows. Catalyzes the transfer of a ribosyl phosphate group from 5-phosphoribose 1-diphosphate to orotate, leading to the formation of orotidine monophosphate (OMP). In Allorhizobium ampelinum (strain ATCC BAA-846 / DSM 112012 / S4) (Agrobacterium vitis (strain S4)), this protein is Orotate phosphoribosyltransferase.